Here is a 158-residue protein sequence, read N- to C-terminus: Nucleoside diphosphate kinase (158 aa).

Lys-16, Phe-64, Arg-92, Thr-98, Arg-109, and Asn-119 together coordinate ATP. The active-site Pros-phosphohistidine intermediate is His-122.

This sequence belongs to the NDK family. Requires Mg(2+) as cofactor.

It localises to the cytoplasm. The enzyme catalyses a 2'-deoxyribonucleoside 5'-diphosphate + ATP = a 2'-deoxyribonucleoside 5'-triphosphate + ADP. It catalyses the reaction a ribonucleoside 5'-diphosphate + ATP = a ribonucleoside 5'-triphosphate + ADP. In terms of biological role, major role in the synthesis of nucleoside triphosphates other than ATP. The ATP gamma phosphate is transferred to the NDP beta phosphate via a ping-pong mechanism, using a phosphorylated active-site intermediate. The polypeptide is Nucleoside diphosphate kinase (Haloquadratum walsbyi (strain DSM 16790 / HBSQ001)).